The chain runs to 149 residues: Nucleoside diphosphate kinase (149 aa).

6 residues coordinate ATP: Lys-9, Phe-57, Arg-85, Thr-91, Arg-102, and Asn-112. His-115 serves as the catalytic Pros-phosphohistidine intermediate.

The protein belongs to the NDK family. Homotetramer. Mg(2+) serves as cofactor.

It is found in the cytoplasm. The catalysed reaction is a 2'-deoxyribonucleoside 5'-diphosphate + ATP = a 2'-deoxyribonucleoside 5'-triphosphate + ADP. It catalyses the reaction a ribonucleoside 5'-diphosphate + ATP = a ribonucleoside 5'-triphosphate + ADP. Major role in the synthesis of nucleoside triphosphates other than ATP. The ATP gamma phosphate is transferred to the NDP beta phosphate via a ping-pong mechanism, using a phosphorylated active-site intermediate. The polypeptide is Nucleoside diphosphate kinase (Roseiflexus sp. (strain RS-1)).